A 713-amino-acid chain; its full sequence is Mitochondrial intermediate peptidase (713 aa).

Residues 1–35 constitute a mitochondrion transit peptide; that stretch reads MLCVGRLGGLGARAAALPPRRAGRGILEAGIRARR. Lys-126 is subject to N6-acetyllysine. His-495 lines the Zn(2+) pocket. Residue Glu-496 is part of the active site. The Zn(2+) site is built by His-499 and His-502.

The protein belongs to the peptidase M3 family. Monomer. The cofactor is Zn(2+).

It localises to the mitochondrion matrix. The catalysed reaction is Release of an N-terminal octapeptide as second stage of processing of some proteins imported into the mitochondrion.. With respect to regulation, activity is divalent cation-dependent. It is stimulated by manganese, magnesium or calcium ions and reversibly inhibited by zinc, cobalt and iron. In terms of biological role, cleaves proteins, imported into the mitochondrion, to their mature size. The sequence is that of Mitochondrial intermediate peptidase (MIPEP) from Pongo abelii (Sumatran orangutan).